A 557-amino-acid chain; its full sequence is Prosaposin (557 aa).

A signal peptide spans 1–16 (MYALALFASLLATALT). Residues 17–59 (SPVQDPKTCSGGSAVLCRDVKTAVDCGAVKHCQQMVWSKPTAK) constitute a propeptide that is removed on maturation. The region spanning 18–58 (PVQDPKTCSGGSAVLCRDVKTAVDCGAVKHCQQMVWSKPTA) is the Saposin A-type 1 domain. Saposin B-type domains lie at 59–142 (KSLP…QSLQ), 193–277 (NEDV…NEVK), 313–394 (NVIL…AARP), and 438–519 (NGGF…PSAY). Cystine bridges form between Cys-63–Cys-138, Cys-66–Cys-132, and Cys-94–Cys-106. N-linked (GlcNAc...) asparagine glycosylation occurs at Asn-80. The propeptide occupies 143-193 (EYLAEQNQKQLESNKIPEVDMARVVAPFMSNIPLLLYPQDHPRSQPQPKAN). 3 disulfide bridges follow: Cys-197/Cys-273, Cys-200/Cys-267, and Cys-229/Cys-240. Asn-214 is a glycosylation site (N-linked (GlcNAc...) asparagine). Residues 277–312 (KRVPMKTLVPATETIKNILPALEMMDPYEQNLVQAH) constitute a propeptide that is removed on maturation. 3 disulfide bridges follow: Cys-317/Cys-390, Cys-320/Cys-384, and Cys-348/Cys-359. N-linked (GlcNAc...) asparagine glycosylation is present at Asn-334. Residues 393–437 (RPELVEALEQPAPAIVSALLKEPTPPKQPAQPKQSALPAHVPPQK) constitute a propeptide that is removed on maturation. 3 disulfides stabilise this stretch: Cys-442-Cys-515, Cys-445-Cys-509, and Cys-473-Cys-484. N-linked (GlcNAc...) asparagine glycosylation occurs at Asn-459. The propeptide occupies 520 to 557 (KLLLGTEKCVWGPSYWCQNMETAARCNAVDHCKRHVWN). The region spanning 521–557 (LLLGTEKCVWGPSYWCQNMETAARCNAVDHCKRHVWN) is the Saposin A-type 2 domain.

In terms of assembly, saposin-B is a homodimer. Prosaposin exists as a roughly half-half mixture of monomers and disulfide-linked dimers. Monomeric prosaposin interacts (via C-terminus) with sortilin/SORT1, the interaction is required for targeting to lysosomes. Interacts with GRN; facilitates lysosomal delivery of progranulin from the extracellular space and the biosynthetic pathway.

The protein resides in the secreted. The protein localises to the lysosome. Functionally, behaves as a myelinotrophic and neurotrophic factor, these effects are mediated by its G-protein-coupled receptors, GPR37 and GPR37L1, undergoing ligand-mediated internalization followed by ERK phosphorylation signaling. In terms of biological role, saposin-A and saposin-C stimulate the hydrolysis of glucosylceramide by beta-glucosylceramidase (EC 3.2.1.45) and galactosylceramide by beta-galactosylceramidase (EC 3.2.1.46). Saposin-C apparently acts by combining with the enzyme and acidic lipid to form an activated complex, rather than by solubilizing the substrate. Saposin-B stimulates the hydrolysis of galacto-cerebroside sulfate by arylsulfatase A (EC 3.1.6.8), GM1 gangliosides by beta-galactosidase (EC 3.2.1.23) and globotriaosylceramide by alpha-galactosidase A (EC 3.2.1.22). Saposin-B forms a solubilizing complex with the substrates of the sphingolipid hydrolases. Its function is as follows. Saposin-D is a specific sphingomyelin phosphodiesterase activator (EC 3.1.4.12). Functionally, saposins are specific low-molecular mass non-enzymatic proteins, they participate in the lysosomal degradation of sphingolipids, which takes place by the sequential action of specific hydrolases. The protein is Prosaposin (Psap) of Mus musculus (Mouse).